We begin with the raw amino-acid sequence, 524 residues long: Metal transporter Nramp2 (524 aa).

A disordered region spans residues 34–58 (AYDSDDKVSIAVSDSDSEDGGGGGG). The next 12 membrane-spanning stretches (helical) occupy residues 70 to 90 (LWRF…PGNL), 98 to 118 (AAAG…GALV), 155 to 175 (LALV…IKIL), 179 to 199 (TVPL…FLFL), 207 to 227 (LEAF…IMFG), 253 to 273 (AVGI…SALV), 295 to 315 (IESI…TTVF), 341 to 361 (YGTA…ASGQ), 389 to 409 (AMIT…FFDT), 420 to 440 (ALNV…ITLV), 457 to 477 (VISW…ILSF), and 486 to 506 (LVRS…VYLI).

This sequence belongs to the NRAMP (TC 2.A.55) family.

The protein localises to the membrane. Functionally, probable metal transporter. This chain is Metal transporter Nramp2 (NRAMP2), found in Oryza sativa subsp. japonica (Rice).